Here is a 248-residue protein sequence, read N- to C-terminus: 1-(5-phosphoribosyl)-5-[(5-phosphoribosylamino)methylideneamino] imidazole-4-carboxamide isomerase (248 aa).

Catalysis depends on Asp-8, which acts as the Proton acceptor. Asp-127 acts as the Proton donor in catalysis.

The protein belongs to the HisA/HisF family.

It localises to the cytoplasm. The catalysed reaction is 1-(5-phospho-beta-D-ribosyl)-5-[(5-phospho-beta-D-ribosylamino)methylideneamino]imidazole-4-carboxamide = 5-[(5-phospho-1-deoxy-D-ribulos-1-ylimino)methylamino]-1-(5-phospho-beta-D-ribosyl)imidazole-4-carboxamide. It participates in amino-acid biosynthesis; L-histidine biosynthesis; L-histidine from 5-phospho-alpha-D-ribose 1-diphosphate: step 4/9. The protein is 1-(5-phosphoribosyl)-5-[(5-phosphoribosylamino)methylideneamino] imidazole-4-carboxamide isomerase of Thermotoga neapolitana (strain ATCC 49049 / DSM 4359 / NBRC 107923 / NS-E).